Consider the following 763-residue polypeptide: Xaa-Pro dipeptidyl-peptidase (763 aa).

Catalysis depends on charge relay system residues serine 348, aspartate 468, and histidine 498.

This sequence belongs to the peptidase S15 family. As to quaternary structure, homodimer.

It localises to the cytoplasm. The catalysed reaction is Hydrolyzes Xaa-Pro-|- bonds to release unblocked, N-terminal dipeptides from substrates including Ala-Pro-|-p-nitroanilide and (sequentially) Tyr-Pro-|-Phe-Pro-|-Gly-Pro-|-Ile.. Functionally, removes N-terminal dipeptides sequentially from polypeptides having unsubstituted N-termini provided that the penultimate residue is proline. The chain is Xaa-Pro dipeptidyl-peptidase (pepX) from Lactococcus lactis subsp. lactis (strain IL1403) (Streptococcus lactis).